The following is a 218-amino-acid chain: dTTP/UTP pyrophosphatase (218 aa).

Residue Asp-76 is the Proton acceptor of the active site.

This sequence belongs to the Maf family. YhdE subfamily. A divalent metal cation is required as a cofactor.

It is found in the cytoplasm. The enzyme catalyses dTTP + H2O = dTMP + diphosphate + H(+). It carries out the reaction UTP + H2O = UMP + diphosphate + H(+). In terms of biological role, nucleoside triphosphate pyrophosphatase that hydrolyzes dTTP and UTP. May have a dual role in cell division arrest and in preventing the incorporation of modified nucleotides into cellular nucleic acids. This Cytophaga hutchinsonii (strain ATCC 33406 / DSM 1761 / CIP 103989 / NBRC 15051 / NCIMB 9469 / D465) protein is dTTP/UTP pyrophosphatase.